We begin with the raw amino-acid sequence, 1005 residues long: PDZ domain-containing protein 7 (1005 aa).

PDZ domains follow at residues 86-168 (SVRV…RMGR) and 210-293 (IVHL…ETGR). Disordered stretches follow at residues 353 to 378 (PEEP…DAGG), 700 to 859 (VSPS…KTPS), and 949 to 1005 (VRVP…ARLL). Residues 770 to 786 (AQSRSRSRSRSRSRSRS) show a composition bias toward basic residues. Low complexity predominate over residues 787–799 (SRGQGKSPGRRSP). Over residues 989 to 998 (PEPPTNPQTP) the composition is skewed to pro residues.

In terms of assembly, homodimerizes (via PDZ2 domain). Component of USH2 complex, composed of ADGRV1, PDZD7, USH2A and WHRN. Interacts (via PDZ domains) with WHRN; the interaction is direct. Interacts with USH1G. Interacts with ADGRV1 (via the cytoplasmic region). Interacts with USH2A (via the cytoplasmic region). Interacts with MYO7A (via MyTH4-FERM domains).

The protein localises to the cell projection. It is found in the cilium. Its subcellular location is the nucleus. The protein resides in the stereocilium. In terms of biological role, in cochlear developing hair cells, essential in organizing the USH2 complex at stereocilia ankle links. Blocks inhibition of adenylate cyclase activity mediated by ADGRV1. This chain is PDZ domain-containing protein 7 (PDZD7), found in Pongo abelii (Sumatran orangutan).